The following is a 309-amino-acid chain: MLGAMEGVLLSVATSEALLGIVGNTFIALVNCMDCTRNKNLYNIGFILTGLAISRICLVWILITEAYIKIFSPQLLSPINIIELISYLWIITSQLNVWFATSLSIFYFLKIANFSHHIFLWLKRRINIVFAFLIGCLLMSWLFSFPVVVKMVKDKKMLYINSSWQIHMKKSELIINYVFTNGGVFLLFIIMLIVCFLLIISLWRHSKWMQSNESGFRDLNTEVHVKTIKVLLSFIILFILHLIGITINVICLLVPENNLLFVFGLTIAFLYPCCHSLILILANSRLKRCFVRILQQLMCSEEGKEFRNT.

Residues 1-7 (MLGAMEG) are Extracellular-facing. Residues 8 to 28 (VLLSVATSEALLGIVGNTFIA) form a helical membrane-spanning segment. Residues 29-43 (LVNCMDCTRNKNLYN) lie on the Cytoplasmic side of the membrane. Residues 44–64 (IGFILTGLAISRICLVWILIT) form a helical membrane-spanning segment. The Extracellular portion of the chain corresponds to 65 to 87 (EAYIKIFSPQLLSPINIIELISY). A helical transmembrane segment spans residues 88-108 (LWIITSQLNVWFATSLSIFYF). The Cytoplasmic segment spans residues 109–127 (LKIANFSHHIFLWLKRRIN). A helical membrane pass occupies residues 128 to 148 (IVFAFLIGCLLMSWLFSFPVV). The Extracellular segment spans residues 149 to 182 (VKMVKDKKMLYINSSWQIHMKKSELIINYVFTNG). Asparagine 161 is a glycosylation site (N-linked (GlcNAc...) asparagine). The helical transmembrane segment at 183-203 (GVFLLFIIMLIVCFLLIISLW) threads the bilayer. The Cytoplasmic portion of the chain corresponds to 204–233 (RHSKWMQSNESGFRDLNTEVHVKTIKVLLS). The helical transmembrane segment at 234-254 (FIILFILHLIGITINVICLLV) threads the bilayer. The Extracellular portion of the chain corresponds to 255–259 (PENNL). The helical transmembrane segment at 260 to 280 (LFVFGLTIAFLYPCCHSLILI) threads the bilayer. Over 281–309 (LANSRLKRCFVRILQQLMCSEEGKEFRNT) the chain is Cytoplasmic.

Belongs to the G-protein coupled receptor T2R family.

Its subcellular location is the membrane. Putative taste receptor which may play a role in the perception of bitterness. This is Taste receptor type 2 member 114 from Rattus norvegicus (Rat).